Consider the following 407-residue polypeptide: MRQLLPGDTVWRNIRLATMDPQQQALYGLVDNQALIVREGHICDIVPETQLPVSGDNIHDMQGRLVTPGLIDCHTHLVFAGNRAAEWEQRLNGASYQHISAQGGGINATVSATRACAEETLYLLARERMMRLASEGVTLLEIKSGYGLELATEEKLLRVAAKLAAENAIDISPTLLAAHATPAEYRDDPDGYITLVCETMIPQLWQKGLFDAVDLFCESVGFNVAQSERVLQTAKALGIPVKGHVEQLSLLGGAQLVSRYQGLSADHIEYLDEVGVAAMRDGGTVGVLLPGAFYFLRETQRPPVELLRRYQVPVAVASDFNPGTSPFCSLHLAMNMACVQFGLTPEEAWAGVTRHAARALGRQATHGQIRAGYRADFVVWDAEQPVEIVYEPGRNPLYQRVYRGKIS.

Fe(3+) is bound by residues H74 and H76. Zn(2+) contacts are provided by H74 and H76. Residues R83, Y146, and H179 each contribute to the 4-imidazolone-5-propanoate site. Y146 is a binding site for N-formimidoyl-L-glutamate. Position 244 (H244) interacts with Fe(3+). H244 contributes to the Zn(2+) binding site. Residue Q247 coordinates 4-imidazolone-5-propanoate. Position 319 (D319) interacts with Fe(3+). D319 contributes to the Zn(2+) binding site. 2 residues coordinate N-formimidoyl-L-glutamate: N321 and G323. Residue T324 participates in 4-imidazolone-5-propanoate binding.

This sequence belongs to the metallo-dependent hydrolases superfamily. HutI family. Zn(2+) serves as cofactor. Requires Fe(3+) as cofactor.

It is found in the cytoplasm. The enzyme catalyses 4-imidazolone-5-propanoate + H2O = N-formimidoyl-L-glutamate. It participates in amino-acid degradation; L-histidine degradation into L-glutamate; N-formimidoyl-L-glutamate from L-histidine: step 3/3. Catalyzes the hydrolytic cleavage of the carbon-nitrogen bond in imidazolone-5-propanoate to yield N-formimidoyl-L-glutamate. It is the third step in the universal histidine degradation pathway. The chain is Imidazolonepropionase from Salmonella typhimurium (strain LT2 / SGSC1412 / ATCC 700720).